Reading from the N-terminus, the 96-residue chain is Large ribosomal subunit protein eL21 (96 aa).

The tract at residues 1 to 37 (MPSSNGPMTGTRDKLSNSPRERGMSPPQRAIQEYDEG) is disordered. The span at 11-23 (TRDKLSNSPRERG) shows a compositional bias: basic and acidic residues.

This sequence belongs to the eukaryotic ribosomal protein eL21 family.

This is Large ribosomal subunit protein eL21 from Haloquadratum walsbyi (strain DSM 16790 / HBSQ001).